The primary structure comprises 138 residues: Basic phospholipase A2 ammodytoxin C (138 aa).

A signal peptide spans 1-16 (MRTLWIVAVCLIGVEG). Intrachain disulfides connect cysteine 42–cysteine 131, cysteine 44–cysteine 60, cysteine 59–cysteine 111, cysteine 65–cysteine 138, cysteine 66–cysteine 104, cysteine 73–cysteine 97, and cysteine 91–cysteine 102. Ca(2+) contacts are provided by tyrosine 43, glycine 45, and glycine 47. The active site involves histidine 63. Residue aspartate 64 participates in Ca(2+) binding. Residue aspartate 105 is part of the active site.

It belongs to the phospholipase A2 family. Group II subfamily. D49 sub-subfamily. Monomer. Binds to calmodulin, coagulation factor X (F10), 14-3-3 proteins gamma (YWHAG) and epsilon (YWHAE), and R25, a mitochondrial membrane protein. May bind to M-type PLA2 receptor (R-180). Ca(2+) serves as cofactor. Expressed by the venom gland.

Its subcellular location is the secreted. The protein localises to the host cytoplasm. It localises to the host cytosol. It carries out the reaction a 1,2-diacyl-sn-glycero-3-phosphocholine + H2O = a 1-acyl-sn-glycero-3-phosphocholine + a fatty acid + H(+). Its function is as follows. Snake venom phospholipase A2 (PLA2) that acts as a presynaptic neurotoxin, an inhibitor of blood coagulation, and has been found to bind with high affinity to intracellular proteins. The response of indirectly stimulated neuromuscular preparations to ammodytoxin (Atx) is triphasic. The first phase, the transient inhibition of the acetylcholine (ACh) release, starts soon after the addition of Atx and lasts for several minutes. This phase is probably independent of Atx enzymatic activity. The effect may be due to the specific binding of the toxin to presynaptic receptors. These receptors, called N-type receptors, are still unidentified. It is noteworthy that a neuronal isoform of the M-type PLA2 receptor (R180) has been identified as a high-affinity receptor for Atx in neuronal plasma membranes. It was demonstrated however that this receptor is not essential for expression of neurotoxicity by Atx. The second phase corresponds to an augmentation of neurotransmitter release. A peak is reached 10-20 minutes after exposure of the preparation to Atx and is followed by a gradual reduction. In this phase, the enzymatic activity of Atx of the mammalian is not significant. It is speculated that the increased release of neurotransmitter in this phase is induced by the interference of Atx with voltage-gated potassium channels. Measurements of ionic showed however that voltage-gated potassium channels are not affected by Atx. The third phase of the response of neuromuscular preparations to Atx, which corresponds to a complete and irreversible paralysis, is clearly dependent on the hydrolytic activity of the toxin. In addition to its presynaptic neurotoxicity, Atx shows an anticoagulant activity by binding with high affinity to activated coagulation factor X (F10) thus inhibiting the formation of the prothrombinase complex (FX/FV) and its activity (IC(50) is 240 nM). Surprisingly, Atx was discovered to bind intracellular proteins such as calmodulin (CaM), 14-3-3 proteins gamma (YWHAG) and epsilon (YWHAE), as well as R25, a mitochondrial integral membrane protein found in cerebral cortex. These findings raised a doubt about the dogma of the exclusively extracellular action of PLA2s, defended by the potential instability of these molecules in the reducing environment of the eukaryotic cytosol coupled with their possible inability to act as enzymes in this cellular compartment, due to too low concentration of calcium ions. This hypothesis was challenged efficiently by demonstrating the internalization of AtxA into a culture cells, but still remains to be directly demonstrated in vivo. PLA2 catalyzes the calcium-dependent hydrolysis of the 2-acyl groups in 3-sn-phosphoglycerides. The protein is Basic phospholipase A2 ammodytoxin C of Vipera ammodytes ammodytes (Western sand viper).